A 447-amino-acid polypeptide reads, in one-letter code: Argininosuccinate synthase (447 aa).

ATP is bound by residues 17–25 (AFSGGLDTS) and Ala-43. Tyr-99 contacts L-citrulline. Residues Gly-129 and Thr-131 each coordinate ATP. 3 residues coordinate L-aspartate: Thr-131, Asn-135, and Asp-136. Position 135 (Asn-135) interacts with L-citrulline. Asp-136 provides a ligand contact to ATP. L-citrulline contacts are provided by Arg-139 and Ser-192. An ATP-binding site is contributed by Asp-194. L-citrulline contacts are provided by Thr-201, Glu-203, and Glu-280.

It belongs to the argininosuccinate synthase family. Type 2 subfamily. As to quaternary structure, homotetramer.

It localises to the cytoplasm. It carries out the reaction L-citrulline + L-aspartate + ATP = 2-(N(omega)-L-arginino)succinate + AMP + diphosphate + H(+). Its pathway is amino-acid biosynthesis; L-arginine biosynthesis; L-arginine from L-ornithine and carbamoyl phosphate: step 2/3. The protein is Argininosuccinate synthase of Escherichia coli O1:K1 / APEC.